Here is a 327-residue protein sequence, read N- to C-terminus: Putative HTH-type transcriptional regulatory protein Mbar_A2318 (327 aa).

In terms of domain architecture, HTH cro/C1-type spans 132-190 (LKKARMGQSMSLGTLASMVGVSRRTISKYEEEGMDASIDVVLQLEDIFGVELAKPINIL). The H-T-H motif DNA-binding region spans 143 to 162 (LGTLASMVGVSRRTISKYEE).

The sequence is that of Putative HTH-type transcriptional regulatory protein Mbar_A2318 from Methanosarcina barkeri (strain Fusaro / DSM 804).